The sequence spans 683 residues: Protein hook (683 aa).

The Calponin-homology (CH) domain maps to 5–123; the sequence is NGMYYSLLEW…RLLQLVLGCA (119 aa). 2 coiled-coil regions span residues 135–440 and 484–594; these read EIMC…LKCG and QTAL…AKEV.

This sequence belongs to the hook family. In terms of assembly, homodimer. Interacts with microtubules via its N-terminus.

Its subcellular location is the cytoplasm. It localises to the cytoskeleton. It is found in the endosome. The protein resides in the synapse. Involved in endocytic trafficking by stabilizing organelles of the endocytic pathway. Probably acts as a cytoskeletal linker protein required to tether endosome vesicles to the cytoskeleton. Involved in modulation of endocytosis at stages required for down-regulation of membrane proteins that control synapse size. Not involved in synaptic vesicle recycling. Required in R7 cells for boss endocytosis into multivesicular bodies (MVBs). Has a role in regulating adult longevity. In Drosophila grimshawi (Hawaiian fruit fly), this protein is Protein hook.